Reading from the N-terminus, the 1167-residue chain is Integrin alpha-E (1167 aa).

Residues 1-19 (MKWLFHTLLCMASLKPQGA) form the signal peptide. At 20 to 1114 (FNLDVDWAWV…IFLKEEETRS (1095 aa)) the chain is on the extracellular side. 2 FG-GAP repeats span residues 27–81 (AWVT…PDEI) and 84–142 (QPVE…LQAQ). Asn-51 carries N-linked (GlcNAc...) asparagine glycosylation. Intrachain disulfides connect Cys-72/Cys-83 and Cys-130/Cys-164. Residues 149–192 (EGFLDPGAHVDSGDYCRSKGGSTGEEKKSARRRRTVEEEDEEED) form an X-domain (extra domain) region. Residues 163–191 (YCRSKGGSTGEEKKSARRRRTVEEEDEEE) are disordered. A VWFA domain is found at 193-382 (GTEIAIVLDG…SKLQQHIVHM (190 aa)). N-linked (GlcNAc...) asparagine glycosylation is found at Asn-256, Asn-314, Asn-341, Asn-364, Asn-418, and Asn-437. Residues 383-435 (EGTVGDALQYQLAQTGFSAQILDKGQVLLGTVGAFNWSGGALLYSTQNGRGCF) form an FG-GAP 3 repeat. FG-GAP repeat units follow at residues 438–491 (QTAK…REED), 492–552 (AFVR…DASF), 555–619 (AHTL…GLYD), and 623–683 (QQIR…FTPD). Ca(2+) is bound by residues Asp-514, Asp-516, Asp-518, Asp-522, Asp-578, Asn-580, Asp-582, Asp-586, Asp-646, Asn-648, Asp-650, and Asp-654. An intrachain disulfide couples Cys-698 to Cys-754. Asn-718 and Asn-773 each carry an N-linked (GlcNAc...) asparagine glycan. Cys-814 and Cys-820 are oxidised to a cystine. N-linked (GlcNAc...) asparagine glycosylation is found at Asn-829 and Asn-846. A disulfide bond links Cys-884 and Cys-898. Asn-911, Asn-925, Asn-968, and Asn-1013 each carry an N-linked (GlcNAc...) asparagine glycan. Cystine bridges form between Cys-998/Cys-1023 and Cys-1031/Cys-1047. N-linked (GlcNAc...) asparagine glycosylation is found at Asn-1055 and Asn-1086. A helical transmembrane segment spans residues 1115–1137 (LPLIIGSSIGGLLVLVVIIAILF). Residues 1138–1167 (KCGFFKRKYQQLNLESTRRAQLKADSLLQD) lie on the Cytoplasmic side of the membrane. A GFFKR motif motif is present at residues 1140–1144 (GFFKR).

The protein belongs to the integrin alpha chain family. In terms of assembly, heterodimer of an alpha and a beta subunit. The alpha subunit is composed of a heavy and a light chains linked by a disulfide bond. Alpha-E associates with beta-7.

The protein resides in the membrane. Integrin alpha-E/beta-7 is a receptor for E-cadherin. It mediates adhesion of intra-epithelial T-lymphocytes to epithelial cell monolayers. Mice expressing a null mutation of the alpha-E subunit gene exhibit a marked reduction in the numbers of intraepithelial lymphocytes in the gut and in the development of gut-associated lymphoid aggregates, supporting a specific role for this integrin in mediating retention of lymphocytes in the intestinal wall. In Mus musculus (Mouse), this protein is Integrin alpha-E (Itgae).